A 499-amino-acid polypeptide reads, in one-letter code: Low-affinity inorganic phosphate transporter PitA (499 aa).

The Periplasmic portion of the chain corresponds to 1–4; it reads MLHL. A helical transmembrane segment spans residues 5–25; the sequence is FAGLDLHTGLLLLLALAFVLF. Residues 26–51 are Cytoplasmic-facing; sequence YEAINGFHDTANAVATVIYTRAMRSQ. The chain crosses the membrane as a helical span at residues 52 to 72; that stretch reads LAVVMAAVFNFLGVLLGGLSV. Topologically, residues 73–93 are periplasmic; it reads AYAIVHMLPTDLLLNMGSSHG. A helical transmembrane segment spans residues 94–114; sequence LAMVFSMLLAAIIWNLGTWYF. Topologically, residues 115 to 123 are cytoplasmic; sequence GLPASSSHT. Residues 124-144 form a helical membrane-spanning segment; that stretch reads LIGAIIGIGLTNALMTGTSVV. The Periplasmic portion of the chain corresponds to 145-154; sequence DALNIPKVLS. Residues 155–175 traverse the membrane as a helical segment; sequence IFGSLIVSPIVGLVFAGGLIF. The Cytoplasmic segment spans residues 176–206; that stretch reads LLRRYWSGTKKRARIHLTPAEREKKDGKKKP. The chain crosses the membrane as a helical span at residues 207-227; that stretch reads PFWTRIALILSAIGVAFSHGA. The Periplasmic portion of the chain corresponds to 228-232; it reads NDGQK. A helical membrane pass occupies residues 233 to 253; it reads GIGLVMLVLIGVAPAGFVVNM. The Cytoplasmic portion of the chain corresponds to 254–381; it reads NATGYEITRT…KSDMLSTIEY (128 aa). A helical transmembrane segment spans residues 382 to 402; that stretch reads APVWIIMAVALALGIGTMIGW. At 403–429 the chain is on the periplasmic side; sequence RRVATTIGEKIGKKGMTYAQGMSAQMT. A helical transmembrane segment spans residues 430–450; that stretch reads AAVSIGLASYTGMPVSTTHVL. The Cytoplasmic portion of the chain corresponds to 451-472; the sequence is SSSVAGTMVVDGGGLQRKTVTS. Residues 473-493 form a helical membrane-spanning segment; it reads ILMAWVFTLPAAVLLSGGLYW. The Periplasmic segment spans residues 494-499; the sequence is LSLQFL.

Belongs to the inorganic phosphate transporter (PiT) (TC 2.A.20) family. Pit subfamily.

The protein resides in the cell inner membrane. The enzyme catalyses phosphate(in) + H(+)(in) = phosphate(out) + H(+)(out). In terms of biological role, low-affinity inorganic phosphate transporter. In Escherichia coli O157:H7, this protein is Low-affinity inorganic phosphate transporter PitA (pitA).